Reading from the N-terminus, the 391-residue chain is Polyketide synthase 5 (391 aa).

Cys164 is an active-site residue.

It belongs to the thiolase-like superfamily. Chalcone/stilbene synthases family. Homodimer. As to expression, expressed in fruits.

It catalyses the reaction (E)-4-coumaroyl-CoA + 3 malonyl-CoA + 3 H(+) = 2',4,4',6'-tetrahydroxychalcone + 3 CO2 + 4 CoA. It participates in secondary metabolite biosynthesis; flavonoid biosynthesis. In terms of biological role, polyketide synthase producing naringenin chalcone. Can use p-coumaryl-CoA as substrate. This Rubus idaeus (Raspberry) protein is Polyketide synthase 5 (PKS5).